The chain runs to 148 residues: Glutamyl-tRNA(Gln) amidotransferase subunit C, mitochondrial (148 aa).

The protein belongs to the GatC family. In terms of assembly, subunit of the heterotrimeric GatCAB amidotransferase (AdT) complex, composed of A, B and C subunits.

The protein localises to the mitochondrion. It carries out the reaction L-glutamyl-tRNA(Gln) + L-glutamine + ATP + H2O = L-glutaminyl-tRNA(Gln) + L-glutamate + ADP + phosphate + H(+). In terms of biological role, allows the formation of correctly charged Gln-tRNA(Gln) through the transamidation of misacylated Glu-tRNA(Gln) in the mitochondria. The reaction takes place in the presence of glutamine and ATP through an activated gamma-phospho-Glu-tRNA(Gln). In Drosophila pseudoobscura pseudoobscura (Fruit fly), this protein is Glutamyl-tRNA(Gln) amidotransferase subunit C, mitochondrial.